The sequence spans 304 residues: UDP-N-acetylenolpyruvoylglucosamine reductase (304 aa).

Residues 33–198 enclose the FAD-binding PCMH-type domain; that stretch reads RVGGPADILV…IEATVELESG (166 aa). R177 is a catalytic residue. S227 acts as the Proton donor in catalysis. E297 is a catalytic residue.

Belongs to the MurB family. FAD is required as a cofactor.

The protein localises to the cytoplasm. The enzyme catalyses UDP-N-acetyl-alpha-D-muramate + NADP(+) = UDP-N-acetyl-3-O-(1-carboxyvinyl)-alpha-D-glucosamine + NADPH + H(+). It functions in the pathway cell wall biogenesis; peptidoglycan biosynthesis. Its function is as follows. Cell wall formation. This Clostridium perfringens (strain ATCC 13124 / DSM 756 / JCM 1290 / NCIMB 6125 / NCTC 8237 / Type A) protein is UDP-N-acetylenolpyruvoylglucosamine reductase.